We begin with the raw amino-acid sequence, 38 residues long: Cytochrome b6-f complex subunit 5 (38 aa).

The chain crosses the membrane as a helical span at residues 5–25; sequence LLCGIVLGLIPVTLLGLFVDA.

Belongs to the PetG family. In terms of assembly, the 4 large subunits of the cytochrome b6-f complex are cytochrome b6, subunit IV (17 kDa polypeptide, PetD), cytochrome f and the Rieske protein, while the 4 small subunits are PetG, PetL, PetM and PetN. The complex functions as a dimer.

It localises to the cellular thylakoid membrane. In terms of biological role, component of the cytochrome b6-f complex, which mediates electron transfer between photosystem II (PSII) and photosystem I (PSI), cyclic electron flow around PSI, and state transitions. PetG is required for either the stability or assembly of the cytochrome b6-f complex. This Prochlorococcus marinus (strain MIT 9313) protein is Cytochrome b6-f complex subunit 5.